The primary structure comprises 26 residues: Protein YsdD (26 aa).

The segment at 1–26 (MTIDKNWLNRSNKDPGRSLRFTHQPV) is disordered.

This Escherichia coli (strain K12) protein is Protein YsdD.